We begin with the raw amino-acid sequence, 401 residues long: Argininosuccinate synthase (401 aa).

An ATP-binding site is contributed by 8–16 (AYSGGLDTS). Tyr85 provides a ligand contact to L-citrulline. Gly115 lines the ATP pocket. L-aspartate-binding residues include Thr117, Asn121, and Asp122. An L-citrulline-binding site is contributed by Asn121. 4 residues coordinate L-citrulline: Arg125, Ser173, Glu258, and Tyr270.

The protein belongs to the argininosuccinate synthase family. Type 1 subfamily. In terms of assembly, homotetramer.

It localises to the cytoplasm. It catalyses the reaction L-citrulline + L-aspartate + ATP = 2-(N(omega)-L-arginino)succinate + AMP + diphosphate + H(+). It participates in amino-acid biosynthesis; L-arginine biosynthesis; L-arginine from L-ornithine and carbamoyl phosphate: step 2/3. This Staphylococcus epidermidis (strain ATCC 35984 / DSM 28319 / BCRC 17069 / CCUG 31568 / BM 3577 / RP62A) protein is Argininosuccinate synthase.